The primary structure comprises 147 residues: Sec-independent protein translocase protein TatB (147 aa).

The helical transmembrane segment at 1 to 21 (MFDVSFTELMVIGVIALVVIG) threads the bilayer. The disordered stretch occupies residues 67-147 (DETARSMQTS…DKTPPTGSAT (81 aa)). The segment covering 93 to 103 (AELDDTARDAS) has biased composition (basic and acidic residues). Low complexity-rich tracts occupy residues 109–120 (ADAPAEPAPAVA) and 129–147 (APPAAATPADKTPPTGSAT).

This sequence belongs to the TatB family. The Tat system comprises two distinct complexes: a TatABC complex, containing multiple copies of TatA, TatB and TatC subunits, and a separate TatA complex, containing only TatA subunits. Substrates initially bind to the TatABC complex, which probably triggers association of the separate TatA complex to form the active translocon.

The protein resides in the cell inner membrane. Part of the twin-arginine translocation (Tat) system that transports large folded proteins containing a characteristic twin-arginine motif in their signal peptide across membranes. Together with TatC, TatB is part of a receptor directly interacting with Tat signal peptides. TatB may form an oligomeric binding site that transiently accommodates folded Tat precursor proteins before their translocation. This is Sec-independent protein translocase protein TatB from Bordetella pertussis (strain Tohama I / ATCC BAA-589 / NCTC 13251).